The sequence spans 122 residues: Large ribosomal subunit protein uL14 (122 aa).

Belongs to the universal ribosomal protein uL14 family. In terms of assembly, part of the 50S ribosomal subunit. Forms a cluster with proteins L3 and L19. In the 70S ribosome, L14 and L19 interact and together make contacts with the 16S rRNA in bridges B5 and B8.

Functionally, binds to 23S rRNA. Forms part of two intersubunit bridges in the 70S ribosome. This chain is Large ribosomal subunit protein uL14, found in Methylobacillus flagellatus (strain ATCC 51484 / DSM 6875 / VKM B-1610 / KT).